The following is a 400-amino-acid chain: Probable RNA polymerase sigma factor RfaY (400 aa).

The short motif at 62 to 75 is the Polymerase core binding element; it reads WQRLAQLHQPASFL. The H-T-H motif DNA-binding region spans 165–184; it reads SDAAVRKRLSRARATVRNEL.

Belongs to the sigma-70 factor family. ECF subfamily.

Sigma factors are initiation factors that promote the attachment of RNA polymerase to specific initiation sites and are then released. This sigma factor is involved in lipopolysaccharide biosynthesis and pathogenicity. In Xanthomonas campestris pv. campestris (strain ATCC 33913 / DSM 3586 / NCPPB 528 / LMG 568 / P 25), this protein is Probable RNA polymerase sigma factor RfaY (rfaY).